A 330-amino-acid chain; its full sequence is ADP-L-glycero-D-manno-heptose-6-epimerase (330 aa).

NADP(+) contacts are provided by residues 11 to 12, 32 to 33, K39, K54, 75 to 79, and N92; these read FI, DN, and EGACS. Y139 (proton acceptor) is an active-site residue. K143 contacts NADP(+). Substrate is bound at residue N168. NADP(+)-binding residues include V169 and K177. K177 acts as the Proton acceptor in catalysis. Residues R179, H186, 200–203, R213, and Y292 contribute to the substrate site; that span reads FGEY.

This sequence belongs to the NAD(P)-dependent epimerase/dehydratase family. HldD subfamily. In terms of assembly, homopentamer. Requires NADP(+) as cofactor.

The catalysed reaction is ADP-D-glycero-beta-D-manno-heptose = ADP-L-glycero-beta-D-manno-heptose. It participates in nucleotide-sugar biosynthesis; ADP-L-glycero-beta-D-manno-heptose biosynthesis; ADP-L-glycero-beta-D-manno-heptose from D-glycero-beta-D-manno-heptose 7-phosphate: step 4/4. Functionally, catalyzes the interconversion between ADP-D-glycero-beta-D-manno-heptose and ADP-L-glycero-beta-D-manno-heptose via an epimerization at carbon 6 of the heptose. The sequence is that of ADP-L-glycero-D-manno-heptose-6-epimerase from Burkholderia cenocepacia (strain HI2424).